The following is a 441-amino-acid chain: Zinc finger protein ZIC 3 (441 aa).

The C2H2-type 1; atypical zinc-finger motif lies at 222–257 (LSCKWLEESTMNHPQKTCDRTFSSMHELVTHMTMEH). Residues 266–293 (HICYWEECPRGGKSFKAKYKLVNHIRVH) form a C2H2-type 2; atypical zinc finger. C2H2-type zinc fingers lie at residues 299–323 (FPCP…KRTH), 329–353 (FKCE…MHVH), and 359–381 (YICK…MKVH). The disordered stretch occupies residues 375-441 (RKHMKVHESQ…LPPNFNEWYV (67 aa)). Residues 383–399 (SQGSDSSPAASSGYESA) show a composition bias toward low complexity. The segment covering 406-429 (SANSEEPSKNSSATHQTNNNSHNT) has biased composition (polar residues).

Belongs to the GLI C2H2-type zinc-finger protein family. In terms of tissue distribution, first detected at early gastrula (stage 10.25) in the dorsal lip and prospective neural plate. Also expressed in the mesoderm at early gastrulation, with expression strongest on the dorsal side. Mesodermal expression continues at stage 12 but is hardly detectable after stage 14. As gastrulation proceeds, expression decreases in the dorsal lip and increases in the prospective neural plate. At the neural plate stage (stage 14), expressed strongly in the prospective mesencephalon and anterior rhombencephalon, after which expression becomes stronger in the anterior neural folds. At early tailbud stage (stage 20), expression becomes restricted to the dorsal region of forebrain, midbrain and hindbrain, and weakly to the dorsal trunk. After mid-tailbud stage, expression decreases in the diencephalon, appears in the lateral mesoderm of the tailbud region and becomes restricted in the dorsal part of the neural tube.

The protein resides in the nucleus. It localises to the cytoplasm. In terms of biological role, probably acts as a transcriptional activator. May bind to the minimal GLI-consensus sequence 5'-GGGTGGTC-3'. Can determine the ectodermal cell fate and promote the earliest step of neural and neural crest development. Involved in establishing left-right asymmetry in the embryo. In Xenopus laevis (African clawed frog), this protein is Zinc finger protein ZIC 3 (zic3).